The following is a 451-amino-acid chain: COBRA-like protein 6 (451 aa).

The N-terminal stretch at 1–21 is a signal peptide; that stretch reads MAVLGSLLLLILAATLSVAVA. N-linked (GlcNAc...) asparagine glycans are attached at residues Asn-30, Asn-155, Asn-163, Asn-202, Asn-227, Asn-323, Asn-338, and Asn-357. Residue Asn-426 is the site of GPI-anchor amidated asparagine attachment. A propeptide spans 427–451 (removed in mature form); the sequence is AAPPAAASLVGSAVAMAALVFFLMA.

It belongs to the COBRA family.

The protein resides in the cell membrane. In terms of biological role, involved in determining the orientation of cell expansion, probably by playing an important role in cellulose deposition. May act by recruiting cellulose synthesizing complexes to discrete positions on the cell surface. The sequence is that of COBRA-like protein 6 (BC1L7) from Oryza sativa subsp. japonica (Rice).